Consider the following 119-residue polypeptide: Ribonuclease P protein component (119 aa).

It belongs to the RnpA family. As to quaternary structure, consists of a catalytic RNA component (M1 or rnpB) and a protein subunit.

It carries out the reaction Endonucleolytic cleavage of RNA, removing 5'-extranucleotides from tRNA precursor.. In terms of biological role, RNaseP catalyzes the removal of the 5'-leader sequence from pre-tRNA to produce the mature 5'-terminus. It can also cleave other RNA substrates such as 4.5S RNA. The protein component plays an auxiliary but essential role in vivo by binding to the 5'-leader sequence and broadening the substrate specificity of the ribozyme. This chain is Ribonuclease P protein component, found in Coprothermobacter proteolyticus (strain ATCC 35245 / DSM 5265 / OCM 4 / BT).